A 240-amino-acid chain; its full sequence is Octanoyltransferase (240 aa).

The region spanning 49 to 233 is the BPL/LPL catalytic domain; it reads GEAPELVWLL…AFESVFGATR (185 aa). Residues 87-94, 162-164, and 175-177 each bind substrate; these read RGGQVTYH, AIG, and GIA. The Acyl-thioester intermediate role is filled by Cys-193.

Belongs to the LipB family.

The protein resides in the cytoplasm. It catalyses the reaction octanoyl-[ACP] + L-lysyl-[protein] = N(6)-octanoyl-L-lysyl-[protein] + holo-[ACP] + H(+). It functions in the pathway protein modification; protein lipoylation via endogenous pathway; protein N(6)-(lipoyl)lysine from octanoyl-[acyl-carrier-protein]: step 1/2. In terms of biological role, catalyzes the transfer of endogenously produced octanoic acid from octanoyl-acyl-carrier-protein onto the lipoyl domains of lipoate-dependent enzymes. Lipoyl-ACP can also act as a substrate although octanoyl-ACP is likely to be the physiological substrate. The sequence is that of Octanoyltransferase from Bradyrhizobium sp. (strain BTAi1 / ATCC BAA-1182).